A 212-amino-acid polypeptide reads, in one-letter code: Protein-L-isoaspartate O-methyltransferase (212 aa).

The active site involves Ser-56.

Belongs to the methyltransferase superfamily. L-isoaspartyl/D-aspartyl protein methyltransferase family.

It is found in the cytoplasm. The catalysed reaction is [protein]-L-isoaspartate + S-adenosyl-L-methionine = [protein]-L-isoaspartate alpha-methyl ester + S-adenosyl-L-homocysteine. Functionally, catalyzes the methyl esterification of L-isoaspartyl residues in peptides and proteins that result from spontaneous decomposition of normal L-aspartyl and L-asparaginyl residues. It plays a role in the repair and/or degradation of damaged proteins. This is Protein-L-isoaspartate O-methyltransferase from Myxococcus xanthus (strain DK1622).